A 381-amino-acid chain; its full sequence is Neuropeptide Y receptor type 2 (381 aa).

A disordered region spans residues 1–35 (MGPIGAEADENQTVEEMKVEQYGPQTTPRGELVPD). Topologically, residues 1 to 51 (MGPIGAEADENQTVEEMKVEQYGPQTTPRGELVPDPEPELIDSTKLIEVQV) are extracellular. Asparagine 11 carries an N-linked (GlcNAc...) asparagine glycan. Residues 52–72 (VLILAYCSIILLGVIGNSLVI) form a helical membrane-spanning segment. At 73-86 (HVVIKFKSMRTVTN) the chain is on the cytoplasmic side. The helical transmembrane segment at 87 to 107 (FFIANLAVADLLVNTLCLPFT) threads the bilayer. At 108 to 124 (LTYTLMGEWKMGPVLCH) the chain is on the extracellular side. A disulfide bond links cysteine 123 and cysteine 203. The chain crosses the membrane as a helical span at residues 125 to 145 (LVPYAQGLAVQVSTITLTVIA). Residues 146–165 (LDRHRCIVYHLESKISKRIS) are Cytoplasmic-facing. The helical transmembrane segment at 166-186 (FLIIGLAWGISALLASPLAIF) threads the bilayer. Residues 187–216 (REYSLIEIIPDFEIVACTEKWPGEEKSIYG) are Extracellular-facing. Residues 217 to 237 (TVYSLSSLLILYVLPLGIISF) traverse the membrane as a helical segment. The Cytoplasmic segment spans residues 238 to 268 (SYTRIWSKLKNHVSPGAANDHYHQRRQKTTK). A helical membrane pass occupies residues 269–289 (MLVCVVVVFAVSWLPLHAFQL). Residues 290 to 304 (AVDIDSQVLDLKEYK) are Extracellular-facing. A helical membrane pass occupies residues 305–325 (LIFTVFHIIAMCSTFANPLLY). Residues 326-381 (GWMNSNYRKAFLSAFRCEQRLDAIHSEVSVTFKAKKNLEVRKNSGPNDSFTEATNV) lie on the Cytoplasmic side of the membrane. Cysteine 342 carries S-palmitoyl cysteine lipidation.

It belongs to the G-protein coupled receptor 1 family. In terms of tissue distribution, high levels in amygdala, corpus callosum, hippocampus and subthalamic nucleus. Also detectable in caudate nucleus, hypothalamus and substantia nigra.

The protein localises to the cell membrane. Receptor for neuropeptide Y and peptide YY. The rank order of affinity of this receptor for pancreatic polypeptides is PYY &gt; NPY &gt; PYY (3-36) &gt; NPY (2-36) &gt; [Ile-31, Gln-34] PP &gt; [Leu-31, Pro-34] NPY &gt; PP, [Pro-34] PYY and NPY free acid. The polypeptide is Neuropeptide Y receptor type 2 (NPY2R) (Homo sapiens (Human)).